Reading from the N-terminus, the 170-residue chain is MRTLTIEPLTKEAFAPFGDVIETEGSDYFMINNGSTRRYHKLATVETAAPEDQAIISIFAAEALEMPLVIRMLERHPLGSQAFIPLLGHPFLVVVAPLGDAPVPGHVRAFRSNGRQGVNYHRGVWHHPVLTIEKRDEFLVVDRSGSGNNCDEYFFTEDQQLLLDPQQVSR.

This sequence belongs to the ureidoglycolate lyase family. Homodimer. It depends on Ni(2+) as a cofactor.

It carries out the reaction (S)-ureidoglycolate = urea + glyoxylate. Its pathway is nitrogen metabolism; (S)-allantoin degradation. Catalyzes the catabolism of the allantoin degradation intermediate (S)-ureidoglycolate, generating urea and glyoxylate. Involved in the utilization of allantoin as nitrogen source. This Stutzerimonas stutzeri (strain A1501) (Pseudomonas stutzeri) protein is Ureidoglycolate lyase.